Here is a 298-residue protein sequence, read N- to C-terminus: L-xylulose reductase (298 aa).

NADP(+) contacts are provided by I19, D68, and N103. Active-site proton donor residues include S161, S162, and Y175. NADP(+) contacts are provided by Y175, K179, and V207. K179 serves as the catalytic Lowers pKa of active site Tyr.

The protein belongs to the short-chain dehydrogenases/reductases (SDR) family.

The catalysed reaction is xylitol + NADP(+) = L-xylulose + NADPH + H(+). It functions in the pathway carbohydrate degradation; L-arabinose degradation via L-arabinitol; D-xylulose 5-phosphate from L-arabinose (fungal route): step 3/5. Functionally, L-xylulose reductase involved in the catabolism of L-arabinose through an oxidoreductive pathway. Catalyzes the NADPH-dependent reduction of L-xylulose. The chain is L-xylulose reductase from Aspergillus niger (strain ATCC 1015 / CBS 113.46 / FGSC A1144 / LSHB Ac4 / NCTC 3858a / NRRL 328 / USDA 3528.7).